The following is a 905-amino-acid chain: Protein translocase subunit SecA (905 aa).

ATP-binding positions include Q89, 107–111 (GEGKT), and D502. Positions 889, 891, 900, and 901 each coordinate Zn(2+).

It belongs to the SecA family. In terms of assembly, monomer and homodimer. Part of the essential Sec protein translocation apparatus which comprises SecA, SecYEG and auxiliary proteins SecDF-YajC and YidC. The cofactor is Zn(2+).

Its subcellular location is the cell inner membrane. It is found in the cytoplasm. It carries out the reaction ATP + H2O + cellular proteinSide 1 = ADP + phosphate + cellular proteinSide 2.. In terms of biological role, part of the Sec protein translocase complex. Interacts with the SecYEG preprotein conducting channel. Has a central role in coupling the hydrolysis of ATP to the transfer of proteins into and across the cell membrane, serving both as a receptor for the preprotein-SecB complex and as an ATP-driven molecular motor driving the stepwise translocation of polypeptide chains across the membrane. This chain is Protein translocase subunit SecA, found in Bartonella tribocorum (strain CIP 105476 / IBS 506).